We begin with the raw amino-acid sequence, 504 residues long: ADP,ATP carrier protein 3 (504 aa).

Helical transmembrane passes span 23–43 (LKLF…FGAL), 59–79 (IISF…TILY), 90–110 (YVFY…AYII), 146–166 (YGLM…LMFW), 183–203 (PVLG…LVFF), 230–250 (EMLQ…MLLF), 296–316 (IALL…PWKA), 329–349 (VHFM…FMII), 364–384 (LLTP…IIFI), 386–406 (EIGS…VGAI), 449–469 (FGKS…PTAT), and 473–493 (IIIY…WDVV).

The protein belongs to the ADP/ATP translocase tlc family.

The protein resides in the cell membrane. Functionally, provides the rickettsial cell with host ATP in exchange for rickettsial ADP. This is an obligate exchange system. This energy acquiring activity is an important component of rickettsial parasitism. This is ADP,ATP carrier protein 3 (tlcC) from Rickettsia bellii (strain RML369-C).